Here is a 197-residue protein sequence, read N- to C-terminus: MAASPKINRREHILQCLATMLETSPGQRITTAKLAAEVGVSEAALYRHFPSKARMFEGLIEFIEESLLSRINLIMDEEKDTMKRCQQLLQLLLVFAERNPGISRVLNGDALLGENERLRSRISQLFAKIETHLKQILREKSLREGKGFNLDEAVLANLLLAVAEGRIAQFVRSEFKLKPTKHFNEQWTFIQQQLLQS.

The 61-residue stretch at 7 to 67 (INRREHILQC…GLIEFIEESL (61 aa)) folds into the HTH tetR-type domain. The H-T-H motif DNA-binding region spans 30 to 49 (TTAKLAAEVGVSEAALYRHF). The stretch at 109–136 (DALLGENERLRSRISQLFAKIETHLKQI) forms a coiled coil.

This sequence belongs to the nucleoid occlusion factor SlmA family. Homodimer. Interacts with FtsZ.

The protein localises to the cytoplasm. It localises to the nucleoid. In terms of biological role, required for nucleoid occlusion (NO) phenomenon, which prevents Z-ring formation and cell division over the nucleoid. Acts as a DNA-associated cell division inhibitor that binds simultaneously chromosomal DNA and FtsZ, and disrupts the assembly of FtsZ polymers. SlmA-DNA-binding sequences (SBS) are dispersed on non-Ter regions of the chromosome, preventing FtsZ polymerization at these regions. The protein is Nucleoid occlusion factor SlmA of Shewanella halifaxensis (strain HAW-EB4).